A 67-amino-acid polypeptide reads, in one-letter code: Sodium channel neurotoxin MeuNaTxalpha-10 (67 aa).

The region spanning arginine 2 to histidine 66 is the LCN-type CS-alpha/beta domain. Intrachain disulfides connect cysteine 12–cysteine 65, cysteine 16–cysteine 38, cysteine 24–cysteine 48, and cysteine 28–cysteine 50. Arginine 67 is a propeptide (removed by a carboxypeptidase).

This sequence belongs to the long (4 C-C) scorpion toxin superfamily. Sodium channel inhibitor family. Alpha subfamily. In terms of tissue distribution, expressed by the venom gland.

It localises to the secreted. Its function is as follows. Alpha toxins bind voltage-independently at site-3 of sodium channels (Nav) and inhibit the inactivation of the activated channels, thereby blocking neuronal transmission. The protein is Sodium channel neurotoxin MeuNaTxalpha-10 of Mesobuthus eupeus (Lesser Asian scorpion).